The sequence spans 365 residues: 3-dehydroquinate synthase (365 aa).

Residues 72 to 77, 130 to 131, Lys-142, and Lys-151 contribute to the NAD(+) site; these read SGEKEK and TT. Positions 184, 247, and 264 each coordinate Zn(2+).

This sequence belongs to the sugar phosphate cyclases superfamily. Dehydroquinate synthase family. Co(2+) is required as a cofactor. Requires Zn(2+) as cofactor. The cofactor is NAD(+).

Its subcellular location is the cytoplasm. The enzyme catalyses 7-phospho-2-dehydro-3-deoxy-D-arabino-heptonate = 3-dehydroquinate + phosphate. It functions in the pathway metabolic intermediate biosynthesis; chorismate biosynthesis; chorismate from D-erythrose 4-phosphate and phosphoenolpyruvate: step 2/7. Its function is as follows. Catalyzes the conversion of 3-deoxy-D-arabino-heptulosonate 7-phosphate (DAHP) to dehydroquinate (DHQ). In Bacillus cereus (strain AH187), this protein is 3-dehydroquinate synthase.